Here is a 345-residue protein sequence, read N- to C-terminus: MARSTVLTPEDEATPAVRHARWQDYFQLMKPRVMSLVVFTALTGLLAARTPIHPLLGAVAVLCIAIGAGASGALNMWYDADIDAKMRRTRGRPVPMGLVKGEEAATLGVVLSLLSVMLMGMAINWLAAGLLAFTIVFYAVVYTMWLKRWTAQNIVIGGLAGALPPAIGWAAATGHAPLNAWLMVLIIFLWTPPHFWALSLYISTDYAKAGVPMLPVVKGAKETRKQILLYSLALIPVCLAPAFTGLGGWLYLAVSGLGGLVFLTLAVRVFRSLAGEASDPRPADRDLYEVGEAAAKRGKPVGDAKHARNLFAFSILYLFALFAALLAEAVLGLPILNLHVLELPL.

9 consecutive transmembrane segments (helical) span residues 33–53 (VMSL…TPIH), 54–74 (PLLG…SGAL), 105–125 (ATLG…AINW), 126–146 (LAAG…TMWL), 154–174 (IVIG…AATG), 182–202 (LMVL…SLYI), 226–246 (QILL…FTGL), 247–267 (GGWL…TLAV), and 315–335 (ILYL…GLPI).

It belongs to the UbiA prenyltransferase family. Protoheme IX farnesyltransferase subfamily.

The protein resides in the cell inner membrane. The catalysed reaction is heme b + (2E,6E)-farnesyl diphosphate + H2O = Fe(II)-heme o + diphosphate. Its pathway is porphyrin-containing compound metabolism; heme O biosynthesis; heme O from protoheme: step 1/1. Its function is as follows. Converts heme B (protoheme IX) to heme O by substitution of the vinyl group on carbon 2 of heme B porphyrin ring with a hydroxyethyl farnesyl side group. The sequence is that of Protoheme IX farnesyltransferase from Caulobacter sp. (strain K31).